Here is a 274-residue protein sequence, read N- to C-terminus: uncharacterized protein (274 aa).

The helical transmembrane segment at 238–258 (ILSVQVIFATVIALIAISVFC) threads the bilayer.

It localises to the membrane. This is an uncharacterized protein from Schizosaccharomyces pombe (strain 972 / ATCC 24843) (Fission yeast).